The chain runs to 311 residues: Methionyl-tRNA formyltransferase (311 aa).

110–113 (SLLP) is a binding site for (6S)-5,6,7,8-tetrahydrofolate.

This sequence belongs to the Fmt family.

It catalyses the reaction L-methionyl-tRNA(fMet) + (6R)-10-formyltetrahydrofolate = N-formyl-L-methionyl-tRNA(fMet) + (6S)-5,6,7,8-tetrahydrofolate + H(+). In terms of biological role, attaches a formyl group to the free amino group of methionyl-tRNA(fMet). The formyl group appears to play a dual role in the initiator identity of N-formylmethionyl-tRNA by promoting its recognition by IF2 and preventing the misappropriation of this tRNA by the elongation apparatus. The protein is Methionyl-tRNA formyltransferase of Streptococcus uberis (strain ATCC BAA-854 / 0140J).